Reading from the N-terminus, the 1258-residue chain is Phospholipid-transporting ATPase C887.12 (1258 aa).

Disordered stretches follow at residues 1–41 (MARD…LGED) and 53–83 (YISS…SKAN). Over 1 to 183 (MARDVDNKQN…PKFLKEQFSK (183 aa)) the chain is Cytoplasmic. Polar residues predominate over residues 53–64 (YISSSGQNSTNP). A helical membrane pass occupies residues 184 to 204 (YANLFFLFTAVVQQIPGITPV). The Lumenal portion of the chain corresponds to 205–208 (NRYT). A helical membrane pass occupies residues 209–229 (TIGPMLIVLSVSGIKEIMEDI). Topologically, residues 230 to 406 (KRKKQDQELN…TSVEKQVNSQ (177 aa)) are cytoplasmic. Residues 407-427 (ILFLLCIFVFLCFASSLGALI) form a helical membrane-spanning segment. Residues 428-451 (HRSVYGSALSYVKYTSNRAGMFFK) are Lumenal-facing. Residues 452-472 (GLLTFWILYSNLVPISLFVTF) traverse the membrane as a helical segment. Over 473 to 974 (ELVRYIQAQL…KLILYSFYKN (502 aa)) the chain is Cytoplasmic. The active-site 4-aspartylphosphate intermediate is aspartate 518. The ATP site is built by aspartate 518, lysine 519, threonine 520, glutamate 613, phenylalanine 654, serine 656, lysine 659, lysine 677, arginine 710, threonine 711, threonine 790, glycine 791, aspartate 792, arginine 883, and lysine 889. Aspartate 518 is a binding site for Mg(2+). Residue threonine 520 participates in Mg(2+) binding. Aspartate 909 contributes to the Mg(2+) binding site. Residues asparagine 912 and aspartate 913 each coordinate ATP. Mg(2+) is bound at residue aspartate 913. Residues 975–995 (IALYMTQFWYAFCNAFSGQVI) traverse the membrane as a helical segment. Topologically, residues 996–998 (FES) are lumenal. Residues 999–1019 (WSISLYNVLFTVLPPVVIGIF) form a helical membrane-spanning segment. At 1020–1051 (DQFVSAGQLFQYPQLYQLGQRSEFFNLKRFWS) the chain is on the cytoplasmic side. Residues 1052–1072 (WITNGFYHSLLLFLCSIAVFY) traverse the membrane as a helical segment. Topologically, residues 1073–1086 (YDGPNKDGLASGHW) are lumenal. The chain crosses the membrane as a helical span at residues 1087-1107 (VWGTTLYAAILATVLGKAALI). Position 1103 (lysine 1103) interacts with a 1,2-diacyl-sn-glycero-3-phospho-(1D-myo-inositol 4-phosphate). Residues 1108–1115 (SNHWTQYT) are Cytoplasmic-facing. A helical transmembrane segment spans residues 1116 to 1136 (VIATLGSFLLWIVFMPIYAVA). Residues 1137 to 1148 (APAIGFSKEYYG) lie on the Lumenal side of the membrane. The chain crosses the membrane as a helical span at residues 1149-1169 (IIPHLYGNLKFWASLLVLPTI). At 1170-1258 (ALMRDFVWKY…HTRGAYGEMR (89 aa)) the chain is on the cytoplasmic side. A 1,2-diacyl-sn-glycero-3-phospho-(1D-myo-inositol 4-phosphate)-binding residues include arginine 1173, tryptophan 1177, lysine 1178, tyrosine 1189, and histidine 1190.

It belongs to the cation transport ATPase (P-type) (TC 3.A.3) family. Type IV subfamily. Requires Mg(2+) as cofactor.

It localises to the endoplasmic reticulum membrane. The protein resides in the golgi apparatus. The protein localises to the trans-Golgi network membrane. It catalyses the reaction ATP + H2O + phospholipidSide 1 = ADP + phosphate + phospholipidSide 2.. The enzyme catalyses a 1,2-diacyl-sn-glycero-3-phospho-L-serine(out) + ATP + H2O = a 1,2-diacyl-sn-glycero-3-phospho-L-serine(in) + ADP + phosphate + H(+). It carries out the reaction a 1,2-diacyl-sn-glycero-3-phosphoethanolamine(out) + ATP + H2O = a 1,2-diacyl-sn-glycero-3-phosphoethanolamine(in) + ADP + phosphate + H(+). Its function is as follows. Catalytic component of a P4-ATPase flippase complex which catalyzes the hydrolysis of ATP coupled to the transport of phosphatidylserine and small amounts of ethanolamine from the lumen to the cytosolic leaflet of the trans-Golgi network and ensures the maintenance of asymmetric distribution of phospholipids. In Schizosaccharomyces pombe (strain 972 / ATCC 24843) (Fission yeast), this protein is Phospholipid-transporting ATPase C887.12.